A 366-amino-acid chain; its full sequence is DNA replication and repair protein RecF (366 aa).

30 to 37 contacts ATP; the sequence is GDNGMGKT.

This sequence belongs to the RecF family.

The protein resides in the cytoplasm. Its function is as follows. The RecF protein is involved in DNA metabolism; it is required for DNA replication and normal SOS inducibility. RecF binds preferentially to single-stranded, linear DNA. It also seems to bind ATP. The protein is DNA replication and repair protein RecF of Azobacteroides pseudotrichonymphae genomovar. CFP2.